A 385-amino-acid chain; its full sequence is NADH-quinone oxidoreductase subunit H (385 aa).

8 consecutive transmembrane segments (helical) span residues glycine 14–leucine 34, phenylalanine 80–isoleucine 100, isoleucine 130–methionine 150, isoleucine 172–phenylalanine 192, leucine 219–phenylalanine 239, methionine 280–valine 300, leucine 325–valine 345, and methionine 365–leucine 385.

It belongs to the complex I subunit 1 family. NDH-1 is composed of 14 different subunits. Subunits NuoA, H, J, K, L, M, N constitute the membrane sector of the complex.

The protein resides in the cell inner membrane. The catalysed reaction is a quinone + NADH + 5 H(+)(in) = a quinol + NAD(+) + 4 H(+)(out). Its function is as follows. NDH-1 shuttles electrons from NADH, via FMN and iron-sulfur (Fe-S) centers, to quinones in the respiratory chain. The immediate electron acceptor for the enzyme in this species is believed to be ubiquinone. Couples the redox reaction to proton translocation (for every two electrons transferred, four hydrogen ions are translocated across the cytoplasmic membrane), and thus conserves the redox energy in a proton gradient. This subunit may bind ubiquinone. The protein is NADH-quinone oxidoreductase subunit H of Bdellovibrio bacteriovorus (strain ATCC 15356 / DSM 50701 / NCIMB 9529 / HD100).